We begin with the raw amino-acid sequence, 247 residues long: UPF0273 protein PH0284 (247 aa).

The region spanning 3-247 (RRVKTGIPGV…VLKRGKVLEL (245 aa)) is the KaiC domain. 30–37 (GGPGTGKT) contributes to the ATP binding site.

Belongs to the UPF0273 family.

This Pyrococcus horikoshii (strain ATCC 700860 / DSM 12428 / JCM 9974 / NBRC 100139 / OT-3) protein is UPF0273 protein PH0284.